Consider the following 378-residue polypeptide: Filamin-binding LIM protein 1 (378 aa).

The filamin-binding stretch occupies residues 1 to 69; sequence MASKPEKRVA…RSWMPPGRAA (69 aa). The tract at residues 38-179 is disordered; the sequence is WPGRPWESAP…PPPEEPVSFP (142 aa). Pro residues predominate over residues 103 to 115; sequence LPPPPPPPAADLP. LIM zinc-binding domains follow at residues 186–247, 248–305, and 306–375; these read DICA…TLEK, CGKC…RKFA, and PVCS…RSAA. Residues 281–378 are PLEKHC1-binding; that stretch reads IGDESFALDS…HVKRSAAGCC (98 aa).

As to quaternary structure, interacts with PLEKHC1, FLNA, FLNB and FLNC. Interacts with NKX2-5.

It is found in the cell junction. Its subcellular location is the focal adhesion. The protein resides in the cytoplasm. It localises to the cytoskeleton. The protein localises to the stress fiber. In terms of biological role, serves as an anchoring site for cell-ECM adhesion proteins and filamin-containing actin filaments. Is implicated in cell shape modulation (spreading) and motility. May participate in the regulation of filamin-mediated cross-linking and stabilization of actin filaments. May also regulate the assembly of filamin-containing signaling complexes that control actin assembly. Promotes dissociation of FLNA from ITGB3 and ITGB7. Promotes activation of integrins and regulates integrin-mediated cell-cell adhesion. This is Filamin-binding LIM protein 1 (FBLIM1) from Bos taurus (Bovine).